The sequence spans 383 residues: Cobalt-precorrin-5B C(1)-methyltransferase (383 aa).

A disordered region spans residues 1 to 24 (MQPSARRPFDLATPAPNGLRRGRT).

The protein belongs to the CbiD family.

The enzyme catalyses Co-precorrin-5B + S-adenosyl-L-methionine = Co-precorrin-6A + S-adenosyl-L-homocysteine. It participates in cofactor biosynthesis; adenosylcobalamin biosynthesis; cob(II)yrinate a,c-diamide from sirohydrochlorin (anaerobic route): step 6/10. Catalyzes the methylation of C-1 in cobalt-precorrin-5B to form cobalt-precorrin-6A. The sequence is that of Cobalt-precorrin-5B C(1)-methyltransferase from Ralstonia nicotianae (strain ATCC BAA-1114 / GMI1000) (Ralstonia solanacearum).